A 357-amino-acid chain; its full sequence is MSGKTKARRAAMFFRRCSEDASGSASGNALLSEDENPDANGVTRSWKIILSTMLTLTFLLVGLLNHQWLKETDVPQKSRQLYAIIAEYGSRLYKYQARLRMPKEQLELLKKESQNLENNFRQILFLIEQIDVLKALLRDMKDGMDNNHNWNTHGDPVEDPDHTEEVSNLVNYVLKKLREDQVEMADYALKSAGASIIEAGTSESYKNNKAKLYWHGIGFLNHEMPPDIILQPDVYPGKCWAFPGSQGHTLIKLATKIIPTAVTMEHISEKVSPSGNISSAPKEFSVYGITKKCEGEEIFLGQFIYNKTGTTVQTFELQHAVSEYLLCVKLNIFSNWGHPKYTCLYRFRVHGTPGKHI.

Residues 1–47 lie on the Nuclear side of the membrane; it reads MSGKTKARRAAMFFRRCSEDASGSASGNALLSEDENPDANGVTRSWK. Residues 48 to 64 form a helical membrane-spanning segment; that stretch reads IILSTMLTLTFLLVGLL. The Perinuclear space segment spans residues 65-357; it reads NHQWLKETDV…RVHGTPGKHI (293 aa). A coiled-coil region spans residues 98-146; that stretch reads RLRMPKEQLELLKKESQNLENNFRQILFLIEQIDVLKALLRDMKDGMDN. In terms of domain architecture, SUN spans 193-354; that stretch reads GASIIEAGTS…YRFRVHGTPG (162 aa).

Self-associates. Interacts with SYNE1 and SPAG4/SUN4. Proposed to form a spermatogenesis-specific LINC complex with SYNE1 during sperm head formation possibly implicating a SUN domain-based heterotrimer with SPAG4/SUN4 associating with SYNE1.

It is found in the membrane. It localises to the nucleus envelope. The protein localises to the nucleus inner membrane. Functionally, as a probable component of the LINC (LInker of Nucleoskeleton and Cytoskeleton) complex, involved in the connection between the nuclear lamina and the cytoskeleton. The nucleocytoplasmic interactions established by the LINC complex play an important role in the transmission of mechanical forces across the nuclear envelope and in nuclear movement and positioning. May be involved in nuclear remodeling during sperm head formation in spermatogenesis. A probable SUN3:SYNE1 LINC complex may tether spermatid nuclei to posterior cytoskeletal structures such as the manchette. The protein is SUN domain-containing protein 3 (SUN3) of Homo sapiens (Human).